The chain runs to 364 residues: MITAEKKKRNKFLPNFEKQSIYSLRYDEMQQWLIDHGQQKFRAKQIFEWLYQKRVNTIDEMTNLSKELRQILKDHFAMTTLTTVVKQESKDGTIKFLFELQDGYTIETVLMRHEYGNSVCVTTQVGCRIGCTFCASTLGGLKRNLEAGEIVSQVLTVQKALDETNERVSQIVIMGIGEPFENYDEMMDFLRIVNDDNSLNIGARHITVSTSGIIPRIYDFAEEDIQINFAVSLHGAKDEIRSRLMPINRAYNVDKLMEAIRYYQEKTNRRVTFEYGLFGGVNDQLEHARDLAHLIKNLNCHVNLIPVNHVPERNYVKTPKDDIFKFEKELKRLGINATIRREQGSDIDAACGQLRAKERQVETR.

The active-site Proton acceptor is glutamate 107. Positions 113–346 (HEYGNSVCVT…ATIRREQGSD (234 aa)) constitute a Radical SAM core domain. A disulfide bond links cysteine 120 and cysteine 351. Residues cysteine 127, cysteine 131, and cysteine 134 each coordinate [4Fe-4S] cluster. Residues 177-178 (GE), serine 209, 232-234 (SLH), and asparagine 308 each bind S-adenosyl-L-methionine. The active-site S-methylcysteine intermediate is the cysteine 351.

This sequence belongs to the radical SAM superfamily. RlmN family. It depends on [4Fe-4S] cluster as a cofactor.

The protein resides in the cytoplasm. The catalysed reaction is adenosine(2503) in 23S rRNA + 2 reduced [2Fe-2S]-[ferredoxin] + 2 S-adenosyl-L-methionine = 2-methyladenosine(2503) in 23S rRNA + 5'-deoxyadenosine + L-methionine + 2 oxidized [2Fe-2S]-[ferredoxin] + S-adenosyl-L-homocysteine. It catalyses the reaction adenosine(37) in tRNA + 2 reduced [2Fe-2S]-[ferredoxin] + 2 S-adenosyl-L-methionine = 2-methyladenosine(37) in tRNA + 5'-deoxyadenosine + L-methionine + 2 oxidized [2Fe-2S]-[ferredoxin] + S-adenosyl-L-homocysteine. Its function is as follows. Specifically methylates position 2 of adenine 2503 in 23S rRNA and position 2 of adenine 37 in tRNAs. Confers resistance to some classes of antibiotics. The polypeptide is Probable dual-specificity RNA methyltransferase RlmN (Staphylococcus epidermidis (strain ATCC 12228 / FDA PCI 1200)).